The chain runs to 1052 residues: RIMS-binding protein 2 (1052 aa).

Residues 115-164 (GEYIRPLPQPGDRPEPLSAKPTFLSRSGSARCRSESDMENERNSNTSKQR) form a disordered region. Residues 146–156 (CRSESDMENER) show a composition bias toward basic and acidic residues. The SH3 1 domain occupies 167–234 (GKVHLCVARY…PSNFVDFVQD (68 aa)). 3 consecutive Fibronectin type-III domains span residues 297–390 (VPYP…GKDV), 393–475 (APSH…KKEA), and 489–590 (PPQD…VPPT). Disordered regions lie at residues 584-615 (ELLV…DEHL), 629-666 (RAPG…PVST), 697-716 (SAGQ…PDFK), 767-787 (EMQL…NALK), and 805-829 (FPRG…YGRD). Residues 585–598 (LLVPPTPHPRPAPQ) are compositionally biased toward pro residues. Over residues 645–654 (PGRRSPSPSR) the composition is skewed to low complexity. Phosphoserine occurs at positions 704 and 712. A phosphoserine mark is found at S832 and S839. The residue at position 841 (T841) is a Phosphothreonine. SH3 domains follow at residues 848-916 (LPAR…EIQA) and 952-1019 (VSTR…EVPD). A disordered region spans residues 1029–1052 (PSHYSQDTPMRSKAKRKKSVHFTP). Positions 1040 to 1052 (SKAKRKKSVHFTP) are enriched in basic residues.

It belongs to the RIMBP family. In terms of assembly, interacts with RIMS1, RIMS2, CACNA1D and CACNA1B, and potentially with other Ca(2+) channel alpha-1 isoforms.

It localises to the cell membrane. The protein localises to the synapse. Functionally, plays a role in the synaptic transmission as bifunctional linker that interacts simultaneously with RIMS1, RIMS2, CACNA1D and CACNA1B. In Homo sapiens (Human), this protein is RIMS-binding protein 2 (RIMBP2).